The chain runs to 396 residues: Aspartic protease 1 (396 aa).

The signal sequence occupies residues 1-15 (MQTFVLLALVAACSA). In terms of domain architecture, Peptidase A1 spans 68-389 (YLGNITLGTP…DIGNGQIGFA (322 aa)). Asparagine 71 carries an N-linked (GlcNAc...) asparagine glycan. The active site involves aspartate 86. The cysteines at positions 99 and 104 are disulfide-linked. Aspartate 278 is a catalytic residue. Cysteine 313 and cysteine 349 are joined by a disulfide.

Belongs to the peptidase A1 family. In terms of assembly, interacts with B.thuringiensis endotoxin Cry6Aa; the interaction prevents Cry6Aa proteolysis by host gut proteases.

It is found in the cytoplasm. Its subcellular location is the lysosome. The protein localises to the secreted. Its function is as follows. Aspartic protease, which is part of the necrosis cell death pathway. Promotes B.thuringiensis Cry6Aa stability by preventing its proteolysis by host gut proteases. Required for Cry6Aa-induced necrotic death of intestinal cells. Cry6Aa uptake into the host intestinal cells triggers an increase in intracellular Ca(2+) levels leading to lysosome rupture and to the subsequent release of asp-1 which leads to necrosis. This is Aspartic protease 1 from Caenorhabditis elegans.